A 252-amino-acid polypeptide reads, in one-letter code: 5'-nucleotidase SurE (252 aa).

Residues Asp-8, Asp-9, Ser-39, and Asn-95 each contribute to the a divalent metal cation site.

Belongs to the SurE nucleotidase family. Requires a divalent metal cation as cofactor.

The protein resides in the cytoplasm. It carries out the reaction a ribonucleoside 5'-phosphate + H2O = a ribonucleoside + phosphate. In terms of biological role, nucleotidase that shows phosphatase activity on nucleoside 5'-monophosphates. In Clostridium botulinum (strain ATCC 19397 / Type A), this protein is 5'-nucleotidase SurE.